A 205-amino-acid polypeptide reads, in one-letter code: uncharacterized protein (205 aa).

It belongs to the peptidase C56 family.

This is an uncharacterized protein from Methanocaldococcus jannaschii (strain ATCC 43067 / DSM 2661 / JAL-1 / JCM 10045 / NBRC 100440) (Methanococcus jannaschii).